Here is a 319-residue protein sequence, read N- to C-terminus: Curved DNA-binding protein (319 aa).

Residues 5–69 (DYYKILGVEP…QKRAEFDEIR (65 aa)) form the J domain.

It is found in the cytoplasm. Its subcellular location is the nucleoid. DNA-binding protein that preferentially recognizes a curved DNA sequence. It is probably a functional analog of DnaJ; displays overlapping activities with DnaJ, but functions under different conditions, probably acting as a molecular chaperone in an adaptive response to environmental stresses other than heat shock. Lacks autonomous chaperone activity; binds native substrates and targets them for recognition by DnaK. Its activity is inhibited by the binding of CbpM. This is Curved DNA-binding protein from Pseudomonas putida (strain ATCC 700007 / DSM 6899 / JCM 31910 / BCRC 17059 / LMG 24140 / F1).